We begin with the raw amino-acid sequence, 285 residues long: HTH-type transcriptional regulator HexR (285 aa).

One can recognise an HTH rpiR-type domain in the interval 2–78; it reads KNLLEQIQSR…IQLAQSLASG (77 aa). The segment at residues 38–57 is a DNA-binding region (H-T-H motif); sequence IAALAQAAAVSEPTVNRFCR. Residues 122 to 261 form the SIS domain; the sequence is AVDLLIQARQ…ATGVTLRRGV (140 aa).

Its function is as follows. Involved in regulation of glucose metabolism. Transcriptional repressor of the gap-1 gene and of the edd-glk-gltR-2 and zwf-pgl-eda operons. Acts by binding directly to an inverted pseudopalindromic sequence in the promoter region. The polypeptide is HTH-type transcriptional regulator HexR (Pseudomonas aeruginosa (strain ATCC 15692 / DSM 22644 / CIP 104116 / JCM 14847 / LMG 12228 / 1C / PRS 101 / PAO1)).